Here is a 168-residue protein sequence, read N- to C-terminus: Mitochondrial inner membrane protein SHH4 (168 aa).

A mitochondrion-targeting transit peptide spans 1–23 (MSSTKFLKPLCRIRAFHTSIARS). Residues 24-65 (FTIPFLPKIPQKPGGVSGTANDSSYMPPESRAQGSYHWIVER) lie on the Mitochondrial matrix side of the membrane. Residues 66–86 (GLSLAVLPLIAVPLVTTGPIS) form a helical membrane-spanning segment. Topologically, residues 87–92 (TFTDTF) are mitochondrial intermembrane. A helical membrane pass occupies residues 93 to 113 (LSLVLLGHCHIGFQSCIIDYI). Cys101 is a heme binding site. Tyr112 is an a ubiquinone binding site. The Mitochondrial matrix portion of the chain corresponds to 114 to 120 (SERVYGK). Residues 121 to 141 (VHHYAMYLLSLGSFLSFVGIY) traverse the membrane as a helical segment. At 142–168 (KLESQEAGLIASLKSLWDNKPVEKKRQ) the chain is on the mitochondrial intermembrane side.

This sequence belongs to the CybS family. As to quaternary structure, interacts with SDH3.

The protein resides in the mitochondrion inner membrane. Functionally, homolog of SDH4, but seems not to be a stoichiometric subunit of either the succinate dehydrogenase (SDH) complex or the mitochondrial inner membrane translocase TIM22 complex. The chain is Mitochondrial inner membrane protein SHH4 from Saccharomyces cerevisiae (strain ATCC 204508 / S288c) (Baker's yeast).